Consider the following 110-residue polypeptide: uncharacterized protein (110 aa).

The segment at 86–110 is disordered; it reads SEEIDEPVMKKRHRRKGSPHRAPFF. Over residues 95 to 104 the composition is skewed to basic residues; sequence KKRHRRKGSP.

This is an uncharacterized protein from Arabidopsis thaliana (Mouse-ear cress).